The following is an 833-amino-acid chain: Leucine--tRNA ligase (833 aa).

Residues 41 to 52 carry the 'HIGH' region motif; sequence PYPSGAGLHVGH. The 'KMSKS' region signature appears at 610–614; sequence KMSKS. Lys613 contributes to the ATP binding site.

It belongs to the class-I aminoacyl-tRNA synthetase family.

The protein localises to the cytoplasm. The catalysed reaction is tRNA(Leu) + L-leucine + ATP = L-leucyl-tRNA(Leu) + AMP + diphosphate. The protein is Leucine--tRNA ligase of Streptococcus pneumoniae (strain CGSP14).